The chain runs to 214 residues: Adenylate kinase (214 aa).

Position 10–15 (10–15 (GAGKGT)) interacts with ATP. The tract at residues 30–59 (STGDMLRAAIKAGTELGKQAKAVIDAGQLV) is NMP. AMP contacts are provided by residues threonine 31, arginine 36, 57–59 (QLV), 85–88 (GFPR), and glutamine 92. The tract at residues 122–159 (GRRAHLPSGRTYHVVYNPPKVEGKDDVTGEDLVVRDDD) is LID. ATP-binding positions include arginine 123 and 132 to 133 (TY). Arginine 156 and arginine 167 together coordinate AMP. Lysine 200 contributes to the ATP binding site.

Belongs to the adenylate kinase family. Monomer.

The protein resides in the cytoplasm. It carries out the reaction AMP + ATP = 2 ADP. Its pathway is purine metabolism; AMP biosynthesis via salvage pathway; AMP from ADP: step 1/1. Catalyzes the reversible transfer of the terminal phosphate group between ATP and AMP. Plays an important role in cellular energy homeostasis and in adenine nucleotide metabolism. The protein is Adenylate kinase of Vibrio parahaemolyticus serotype O3:K6 (strain RIMD 2210633).